The following is a 135-amino-acid chain: Gene 52 protein (135 aa).

Disordered regions lie at residues 1-20 and 110-135; these read MASG…PTPE and LGGR…AEKQ. Residues 122-135 show a composition bias toward basic residues; sequence SKPRGRSKHRAEKQ.

Belongs to the herpesviridae BLRF2 family.

This is Gene 52 protein (52) from Equine herpesvirus 2 (strain 86/87) (EHV-2).